The primary structure comprises 468 residues: Hydroxymethylglutaryl-CoA synthase B (468 aa).

The active-site Proton donor/acceptor is the E85. Residue C119 is the Acyl-thioester intermediate of the active site. 7 residues coordinate (3S)-3-hydroxy-3-methylglutaryl-CoA: C119, T161, S211, H250, K259, N327, and S359. The Proton donor/acceptor role is filled by H250.

This sequence belongs to the thiolase-like superfamily. HMG-CoA synthase family.

The catalysed reaction is acetoacetyl-CoA + acetyl-CoA + H2O = (3S)-3-hydroxy-3-methylglutaryl-CoA + CoA + H(+). Its pathway is metabolic intermediate biosynthesis; (R)-mevalonate biosynthesis; (R)-mevalonate from acetyl-CoA: step 2/3. Its function is as follows. Condenses acetyl-CoA with acetoacetyl-CoA to form HMG-CoA, which is the substrate for HMG-CoA reductase. The protein is Hydroxymethylglutaryl-CoA synthase B (hgsB) of Dictyostelium discoideum (Social amoeba).